Here is a 490-residue protein sequence, read N- to C-terminus: Betaine aldehyde dehydrogenase (490 aa).

D93 serves as a coordination point for K(+). 150 to 152 (GAW) is an NAD(+) binding site. K162 functions as the Charge relay system in the catalytic mechanism. Residue 176-179 (KPSE) coordinates NAD(+). Residue V180 participates in K(+) binding. 230-233 (GIAS) is a binding site for NAD(+). L246 serves as a coordination point for K(+). The active-site Proton acceptor is E252. Residues G254, C286, and E387 each contribute to the NAD(+) site. The active-site Nucleophile is the C286. Position 286 is a cysteine sulfenic acid (-SOH) (C286). 2 residues coordinate K(+): K457 and G460. The active-site Charge relay system is the E464.

This sequence belongs to the aldehyde dehydrogenase family. In terms of assembly, dimer of dimers. K(+) is required as a cofactor.

The catalysed reaction is betaine aldehyde + NAD(+) + H2O = glycine betaine + NADH + 2 H(+). It functions in the pathway amine and polyamine biosynthesis; betaine biosynthesis via choline pathway; betaine from betaine aldehyde: step 1/1. In terms of biological role, involved in the biosynthesis of the osmoprotectant glycine betaine. Catalyzes the irreversible oxidation of betaine aldehyde to the corresponding acid. In Yersinia pseudotuberculosis serotype IB (strain PB1/+), this protein is Betaine aldehyde dehydrogenase.